The sequence spans 337 residues: P2Y purinoceptor 14 (337 aa).

The Extracellular segment spans residues 1–28 (MNATSVPPAEGSCPSNALITKQIIPMLY). The N-linked (GlcNAc...) asparagine glycan is linked to Asn-2. A helical membrane pass occupies residues 29–49 (FVVFVAGILLNGMSGWVFFYV). Residues 50–54 (PSSKS) are Cytoplasmic-facing. Residues 55 to 75 (FIVYLKNIVIADFLMSLTFPF) form a helical membrane-spanning segment. Residues 76 to 95 (KILGDLGLGLWQVKVFVCRV) are Extracellular-facing. An intrachain disulfide couples Cys-93 to Cys-171. A helical transmembrane segment spans residues 96-116 (SAVLFYINMYVSIVFFGLIGF). Residues 117–138 (DRYYKIVKPLLTSFIQSISYSK) lie on the Cytoplasmic side of the membrane. Residues 139-159 (LLSVLVWSLTLLIALPNMILT) traverse the membrane as a helical segment. Topologically, residues 160 to 187 (NRNVTEATRVKCMDLKSDLGLKWHKASS) are extracellular. Asn-162 is a glycosylation site (N-linked (GlcNAc...) asparagine). Residues 188 to 208 (YIFVGIFWIVFLSLIIFYTAI) traverse the membrane as a helical segment. The Cytoplasmic segment spans residues 209-233 (TKKIFKSHFKSRKNSVSVKKKSSRN). The helical transmembrane segment at 234–254 (IFSIMFVFFICFVPYHIARIP) threads the bilayer. The Extracellular segment spans residues 255-277 (YTQSQTEAHYSCQSKQILFYVKE). A helical membrane pass occupies residues 278 to 298 (FSLLLSAANVCLDPIIYFFLC). The Cytoplasmic portion of the chain corresponds to 299 to 337 (QPFREVLCKKLHIQLKTQHDSETSKIKRENIIQESTDTL).

The protein belongs to the G-protein coupled receptor 1 family.

It localises to the cell membrane. In terms of biological role, receptor for UDP-glucose and other UDP-sugar coupled to G-proteins. Not activated by ATP, ADP, UTP or ATP. The chain is P2Y purinoceptor 14 (P2RY14) from Bos taurus (Bovine).